The primary structure comprises 314 residues: Methionyl-tRNA formyltransferase (314 aa).

Residue 113–116 (SLLP) participates in (6S)-5,6,7,8-tetrahydrofolate binding.

The protein belongs to the Fmt family.

The enzyme catalyses L-methionyl-tRNA(fMet) + (6R)-10-formyltetrahydrofolate = N-formyl-L-methionyl-tRNA(fMet) + (6S)-5,6,7,8-tetrahydrofolate + H(+). Functionally, attaches a formyl group to the free amino group of methionyl-tRNA(fMet). The formyl group appears to play a dual role in the initiator identity of N-formylmethionyl-tRNA by promoting its recognition by IF2 and preventing the misappropriation of this tRNA by the elongation apparatus. This chain is Methionyl-tRNA formyltransferase, found in Chlorobaculum tepidum (strain ATCC 49652 / DSM 12025 / NBRC 103806 / TLS) (Chlorobium tepidum).